Consider the following 451-residue polypeptide: Phosphoglucosamine mutase (451 aa).

Ser107 acts as the Phosphoserine intermediate in catalysis. Mg(2+)-binding residues include Ser107, Asp246, Asp248, and Asp250. Ser107 bears the Phosphoserine mark.

Belongs to the phosphohexose mutase family. Requires Mg(2+) as cofactor. Post-translationally, activated by phosphorylation.

It carries out the reaction alpha-D-glucosamine 1-phosphate = D-glucosamine 6-phosphate. Functionally, catalyzes the conversion of glucosamine-6-phosphate to glucosamine-1-phosphate. This chain is Phosphoglucosamine mutase, found in Burkholderia ambifaria (strain MC40-6).